We begin with the raw amino-acid sequence, 432 residues long: Anaerobic glycerol-3-phosphate dehydrogenase subunit B (432 aa).

The protein belongs to the anaerobic G-3-P dehydrogenase subunit B family. In terms of assembly, composed of a catalytic GlpA/B dimer and of membrane bound GlpC. It depends on FMN as a cofactor.

The catalysed reaction is a quinone + sn-glycerol 3-phosphate = dihydroxyacetone phosphate + a quinol. It participates in polyol metabolism; glycerol degradation via glycerol kinase pathway; glycerone phosphate from sn-glycerol 3-phosphate (anaerobic route): step 1/1. Its function is as follows. Conversion of glycerol 3-phosphate to dihydroxyacetone. Uses fumarate or nitrate as electron acceptor. The protein is Anaerobic glycerol-3-phosphate dehydrogenase subunit B of Histophilus somni (strain 129Pt) (Haemophilus somnus).